Here is a 163-residue protein sequence, read N- to C-terminus: Phosphopantetheine adenylyltransferase (163 aa).

Residue serine 9 participates in substrate binding. Residues 9–10 and histidine 17 contribute to the ATP site; that span reads SF. 3 residues coordinate substrate: lysine 41, valine 78, and arginine 92. ATP contacts are provided by residues 93 to 95, glutamate 103, and 128 to 134; these read GLR and SRPITAT.

It belongs to the bacterial CoaD family. Homohexamer. It depends on Mg(2+) as a cofactor.

The protein localises to the cytoplasm. The catalysed reaction is (R)-4'-phosphopantetheine + ATP + H(+) = 3'-dephospho-CoA + diphosphate. Its pathway is cofactor biosynthesis; coenzyme A biosynthesis; CoA from (R)-pantothenate: step 4/5. Its function is as follows. Reversibly transfers an adenylyl group from ATP to 4'-phosphopantetheine, yielding dephospho-CoA (dPCoA) and pyrophosphate. This Rhizobium meliloti (strain 1021) (Ensifer meliloti) protein is Phosphopantetheine adenylyltransferase.